The following is a 226-amino-acid chain: Elongation factor 1-delta 2 (226 aa).

The interval 82–131 is disordered; that stretch reads TACSVSPTADQKAPAADEEDDDDVDLFGEETEEEKKAAEERAAAVKASGK. The segment covering 97–113 has biased composition (acidic residues); the sequence is ADEEDDDDVDLFGEETE. Positions 114-124 are enriched in basic and acidic residues; that stretch reads EEKKAAEERAA.

It belongs to the EF-1-beta/EF-1-delta family. In terms of assembly, EF-1 is composed of 4 subunits: alpha, beta (1B-alpha=beta'), delta (1B-beta), and gamma (1B-gamma).

Functionally, EF-1-beta and EF-1-beta' stimulate the exchange of GDP bound to EF-1-alpha to GTP. This chain is Elongation factor 1-delta 2, found in Oryza sativa subsp. japonica (Rice).